We begin with the raw amino-acid sequence, 122 residues long: Large ribosomal subunit protein uL14 (122 aa).

It belongs to the universal ribosomal protein uL14 family. Part of the 50S ribosomal subunit. Forms a cluster with proteins L3 and L19. In the 70S ribosome, L14 and L19 interact and together make contacts with the 16S rRNA in bridges B5 and B8.

Functionally, binds to 23S rRNA. Forms part of two intersubunit bridges in the 70S ribosome. The protein is Large ribosomal subunit protein uL14 of Francisella tularensis subsp. holarctica (strain LVS).